The following is a 229-amino-acid chain: uncharacterized protein (229 aa).

This is an uncharacterized protein from Sulfolobus islandicus filamentous virus (isolate Iceland/Hveragerdi) (SIFV).